Consider the following 591-residue polypeptide: Mono(ADP-ribosyl)transferase SpvB (591 aa).

The region spanning 373 to 576 is the TR mART core domain; that stretch reads PMMGGNSSRP…LRLSDDATAD (204 aa). Residues R471, S501, and E538 contribute to the active site.

It belongs to the SpvB family.

It localises to the secreted. The catalysed reaction is L-arginyl-[protein] + NAD(+) = N(omega)-(ADP-D-ribosyl)-L-arginyl-[protein] + nicotinamide + H(+). Functionally, mono-ADP-ribosylates eukaryotic muscle and non-muscle actin on 'Arg-177'. ADP-ribosylation prevents the polymerization of G-actin to F-actin, causing actin filament depolymerization, destruction of the cytoskeleton and cytotoxicity. Does not possess NAD(+)-glycohydrolase activity, unlike most mART enzymes. The sequence is that of Mono(ADP-ribosyl)transferase SpvB (spvB) from Salmonella typhimurium (strain 14028s / SGSC 2262).